We begin with the raw amino-acid sequence, 329 residues long: Cardiolipin synthase (CMP-forming) (329 aa).

The N-terminal 34 residues, 1 to 34, are a transit peptide targeting the mitochondrion; the sequence is MPPSVATHASLLLKAAAAAAHLHPKPFFSPRAAP. The segment at 27 to 55 is disordered; it reads FFSPRAAPPRIPSAPAPPAAGGSRYRPTT. The span at 32 to 44 shows a compositional bias: pro residues; the sequence is AAPPRIPSAPAPP. 5 helical membrane-spanning segments follow: residues 134-154, 156-176, 194-214, 228-248, and 298-318; these read LLTL…LLIS, FYME…AAAV, FGAF…LVLL, PWLL…MSAV, and VTSG…SLVV. Residues 319-329 lie on the Mitochondrial intermembrane side of the membrane; the sequence is YMRKIWRILLK.

This sequence belongs to the CDP-alcohol phosphatidyltransferase class-I family. Mn(2+) serves as cofactor.

It is found in the mitochondrion inner membrane. It catalyses the reaction a CDP-1,2-diacyl-sn-glycerol + a 1,2-diacyl-sn-glycero-3-phospho-(1'-sn-glycerol) = a cardiolipin + CMP + H(+). Functionally, catalyzes the synthesis of cardiolipin (CL) (diphosphatidylglycerol) by specifically transferring a phosphatidyl group from CDP-diacylglycerol to phosphatidylglycerol (PG). CL is a key phospholipid in mitochondrial membranes and plays important roles in maintaining the functional integrity and dynamics of mitochondria under both optimal and stress conditions. The sequence is that of Cardiolipin synthase (CMP-forming) from Oryza sativa subsp. japonica (Rice).